Consider the following 116-residue polypeptide: Cell cycle protein GpsB (116 aa).

Residues 32 to 69 (LDDVIKDYETYSALVKELREENSRLKQELSKRMQEAPN) adopt a coiled-coil conformation. The tract at residues 57–78 (KQELSKRMQEAPNSTASQVHQS) is disordered. Polar residues predominate over residues 67 to 78 (APNSTASQVHQS).

It belongs to the GpsB family. In terms of assembly, forms polymers through the coiled coil domains. Interacts with PBP1, MreC and EzrA.

Its subcellular location is the cytoplasm. In terms of biological role, divisome component that associates with the complex late in its assembly, after the Z-ring is formed, and is dependent on DivIC and PBP2B for its recruitment to the divisome. Together with EzrA, is a key component of the system that regulates PBP1 localization during cell cycle progression. Its main role could be the removal of PBP1 from the cell pole after pole maturation is completed. Also contributes to the recruitment of PBP1 to the division complex. Not essential for septum formation. In Streptococcus gordonii (strain Challis / ATCC 35105 / BCRC 15272 / CH1 / DL1 / V288), this protein is Cell cycle protein GpsB.